The following is a 120-amino-acid chain: MIVGIGIDIVELHRVAELMERQPKFIERILTDNEHIRFQQLSSKRKIEFVAGRFAAKEAYAKALGTGIGTHVSFHDIEIKNDENGKPYIISPSMDERVHVSISHSEHYAVAQVIIERLSS.

Residues Asp8 and Glu58 each contribute to the Mg(2+) site.

This sequence belongs to the P-Pant transferase superfamily. AcpS family. It depends on Mg(2+) as a cofactor.

It is found in the cytoplasm. The catalysed reaction is apo-[ACP] + CoA = holo-[ACP] + adenosine 3',5'-bisphosphate + H(+). Functionally, transfers the 4'-phosphopantetheine moiety from coenzyme A to a Ser of acyl-carrier-protein. This chain is Holo-[acyl-carrier-protein] synthase, found in Anoxybacillus flavithermus (strain DSM 21510 / WK1).